The primary structure comprises 153 residues: MKTFSLKPADVEKKWVIIDAEGLVVGRLASIVAMRLRGKHKPQYTPHVDCGDNVIVINADKVKFTGRKYDQKVYYHHTGYPGGIKERSAKFILEGRFPERVVEKAVERMLPRGPLFRKILGNLRVYKGSEHPHAAQQPETLDVAALNRKNVSA.

This sequence belongs to the universal ribosomal protein uL13 family. In terms of assembly, part of the 50S ribosomal subunit.

Its function is as follows. This protein is one of the early assembly proteins of the 50S ribosomal subunit, although it is not seen to bind rRNA by itself. It is important during the early stages of 50S assembly. This chain is Large ribosomal subunit protein uL13, found in Methylobacterium nodulans (strain LMG 21967 / CNCM I-2342 / ORS 2060).